The primary structure comprises 856 residues: Lon protease homolog 2, peroxisomal (856 aa).

In terms of domain architecture, Lon N-terminal spans 13–222 (LPLLLTHEGV…VTIPLLLRQI (210 aa)). Position 379–386 (379–386 (GPPGVGKT)) interacts with ATP. The span at 586-608 (GQHREHKSEHLEAPEGEERKESV) shows a compositional bias: basic and acidic residues. The tract at residues 586-614 (GQHREHKSEHLEAPEGEERKESVPEGSKS) is disordered. Residues 655–841 (LNQPGVAIGL…DEVLNAAFDG (187 aa)) form the Lon proteolytic domain. Active-site residues include Ser-747 and Lys-790. The short motif at 854–856 (SKL) is the Microbody targeting signal element.

It belongs to the peptidase S16 family.

The protein localises to the peroxisome matrix. The enzyme catalyses Hydrolysis of proteins in presence of ATP.. ATP-dependent serine protease that mediates the selective degradation of misfolded and unassembled polypeptides in the peroxisomal matrix. Necessary for type 2 peroxisome targeting signal (PTS2)-containing protein processing and facilitates peroxisome matrix protein import. The protein is Lon protease homolog 2, peroxisomal (lonp2) of Xenopus laevis (African clawed frog).